We begin with the raw amino-acid sequence, 193 residues long: dTTP/UTP pyrophosphatase (193 aa).

Residue aspartate 71 is the Proton acceptor of the active site.

The protein belongs to the Maf family. YhdE subfamily. A divalent metal cation serves as cofactor.

It localises to the cytoplasm. The catalysed reaction is dTTP + H2O = dTMP + diphosphate + H(+). It carries out the reaction UTP + H2O = UMP + diphosphate + H(+). Functionally, nucleoside triphosphate pyrophosphatase that hydrolyzes dTTP and UTP. May have a dual role in cell division arrest and in preventing the incorporation of modified nucleotides into cellular nucleic acids. In Dictyoglomus turgidum (strain DSM 6724 / Z-1310), this protein is dTTP/UTP pyrophosphatase.